We begin with the raw amino-acid sequence, 471 residues long: Putative ABC transporter ATP-binding protein STK_11360 (471 aa).

2 consecutive ABC transporter domains span residues 4 to 241 and 255 to 470; these read LEIK…LEPL and VILE…VIKD. ATP contacts are provided by residues 37–44 and 286–293; these read GKSGSGKS and GDNGSGKS.

The protein belongs to the ABC transporter superfamily.

Its subcellular location is the cell membrane. Probably part of an ABC transporter complex. Responsible for energy coupling to the transport system. The chain is Putative ABC transporter ATP-binding protein STK_11360 from Sulfurisphaera tokodaii (strain DSM 16993 / JCM 10545 / NBRC 100140 / 7) (Sulfolobus tokodaii).